We begin with the raw amino-acid sequence, 341 residues long: Basic membrane protein B (341 aa).

A signal peptide spans 1-14; that stretch reads MRIAIFIFGILLTS. C15 carries N-palmitoyl cysteine lipidation. C15 carries S-diacylglycerol cysteine lipidation.

This sequence belongs to the BMP lipoprotein family. In terms of assembly, monomer.

It is found in the cell inner membrane. In terms of biological role, may be part of an ABC-type nucleoside uptake system involved in the purine salvage pathway. The protein is Basic membrane protein B (bmpB) of Borreliella afzelii (strain PKo) (Borrelia afzelii).